Here is a 485-residue protein sequence, read N- to C-terminus: Glutamyl-tRNA(Gln) amidotransferase subunit A (485 aa).

Catalysis depends on charge relay system residues lysine 79 and serine 154. Serine 178 functions as the Acyl-ester intermediate in the catalytic mechanism.

It belongs to the amidase family. GatA subfamily. In terms of assembly, heterotrimer of A, B and C subunits.

The enzyme catalyses L-glutamyl-tRNA(Gln) + L-glutamine + ATP + H2O = L-glutaminyl-tRNA(Gln) + L-glutamate + ADP + phosphate + H(+). Functionally, allows the formation of correctly charged Gln-tRNA(Gln) through the transamidation of misacylated Glu-tRNA(Gln) in organisms which lack glutaminyl-tRNA synthetase. The reaction takes place in the presence of glutamine and ATP through an activated gamma-phospho-Glu-tRNA(Gln). This is Glutamyl-tRNA(Gln) amidotransferase subunit A from Staphylococcus aureus (strain bovine RF122 / ET3-1).